Consider the following 53-residue polypeptide: Sodium/potassium-transporting ATPase subunit gamma (53 aa).

Residues glycine 16 to serine 34 form a helical membrane-spanning segment.

The protein belongs to the FXYD family. As to quaternary structure, regulatory subunit of the sodium/potassium-transporting ATPase which is composed of a catalytic alpha subunit, an auxiliary non-catalytic beta subunit and an additional regulatory subunit. The N-terminus is blocked. In terms of tissue distribution, highest levels expressed in the kidney and spleen. Restricted to the basolateral membrane in renal epithelial cells and varies in its level of expression along the nephron.

The protein resides in the membrane. In terms of biological role, may be involved in forming the receptor site for cardiac glycoside binding or may modulate the transport function of the sodium ATPase. The polypeptide is Sodium/potassium-transporting ATPase subunit gamma (FXYD2) (Ovis aries (Sheep)).